We begin with the raw amino-acid sequence, 787 residues long: Longitudinals lacking protein, isoforms A/B/D/L (787 aa).

In terms of domain architecture, BTB spans 32-97 (VDCTLAAEGK…MYRGEVNISQ (66 aa)). Disordered regions lie at residues 115-200 (LSDN…SSVL), 228-340 (SSGP…ASAS), 506-560 (AKDV…SGGK), and 653-677 (TTGSGQSPSNSGHNNSAGGGSSVLG). 6 stretches are compositionally biased toward low complexity: residues 162–175 (SGDVSGSREGSSSP), 228–251 (SSGPAAGTSSQASSTQQQQPLTST), 263–293 (TSSTAAPASGASASAAVQQAHLHQQQAQTTS), 329–340 (NSATGPNPASAS), 537–560 (HSSSNHSSNGNGSGKPTKTSSGGK), and 659–668 (SPSNSGHNNS). Residues 685-707 (HPCPVCGRVYKLKSSLRNHQKWE) form a C2H2-type 1; degenerate zinc finger. Residues 714–737 (FQCPFCVYRAKQKMHIGRHMERMH) form a C2H2-type 2 zinc finger.

Isoform D interacts with JIL-1. By stage 11, isoform B is expressed throughout the mesoderm, whereas isoform A, isoform D and isoform L are expressed throughout the ectoderm. Expression becomes restricted during later stages; starting from stage 14 to 16, isoform B is expressed in muscle. Isoform A, isoform D, and at low levels isoform B, are expressed in the CNS. Expression is also seen in specific types of cells in the embryo; isoform A and isoform L are expressed in a dynamic pattern in the ventral neurogenic region starting at stage 7. Isoform L is expressed around the tracheal pits at stage 11.

It localises to the nucleus. In terms of biological role, putative transcription factor required for axon growth and guidance in the central and peripheral nervous systems. Repels CNS axons away from the midline by promoting the expression of the midline repellent sli and its receptor robo. The sequence is that of Longitudinals lacking protein, isoforms A/B/D/L from Drosophila melanogaster (Fruit fly).